The following is a 146-amino-acid chain: Snaclec anticoagulant protein subunit B (146 aa).

The signal sequence occupies residues Met1–Ala23. In terms of domain architecture, C-type lectin spans Asp24 to Ala146. Cystine bridges form between Cys25–Cys36, Cys53–Cys142, and Cys119–Cys134. Ser64, Gln66, and Glu70 together coordinate Ca(2+). Glu143 contacts Ca(2+).

Belongs to the snaclec family. In terms of assembly, heterodimer with subunit A of agkisacutacin or AaACP; disulfide-linked. Expressed by the venom gland.

Its subcellular location is the secreted. Anticoagulant protein which binds to the gamma-carboxyglutamic acid-domain regions of factors IX and factor X in the presence of calcium with a 1 to 1 stoichiometry. Also inhibits platelet aggregation by binding to platelet glycoprotein Ibalpha (GP1BA) and functioning as a blocker of vWF. Is devoid of hemorrhagic and lethal activities. Possesses antithrombotic and thrombolytic activities. Also hydrolyzes the Aalpha-chain of fibrinogen. Does not affect the Bbeta-chain and the gamma chain. In Deinagkistrodon acutus (Hundred-pace snake), this protein is Snaclec anticoagulant protein subunit B.